We begin with the raw amino-acid sequence, 459 residues long: Mitochondrial distribution and morphology protein 10 (459 aa).

This sequence belongs to the MDM10 family. Component of the ER-mitochondria encounter structure (ERMES) or MDM complex, composed of mmm1, mdm10, mdm12 and mdm34. Associates with the mitochondrial outer membrane sorting assembly machinery SAM(core) complex.

It is found in the mitochondrion outer membrane. In terms of biological role, component of the ERMES/MDM complex, which serves as a molecular tether to connect the endoplasmic reticulum and mitochondria. Components of this complex are involved in the control of mitochondrial shape and protein biogenesis and may function in phospholipid exchange. mdm10 is involved in the late assembly steps of the general translocase of the mitochondrial outer membrane (TOM complex). Functions in the tom40-specific route of the assembly of outer membrane beta-barrel proteins, including the association of tom40 with the receptor tom22 and small TOM proteins. Can associate with the SAM(core) complex as well as the mdm12-mmm1 complex, both involved in late steps of the major beta-barrel assembly pathway, that is responsible for biogenesis of all outer membrane beta-barrel proteins. May act as a switch that shuttles between both complexes and channels precursor proteins into the tom40-specific pathway. Plays a role in mitochondrial morphology and in the inheritance of mitochondria. The protein is Mitochondrial distribution and morphology protein 10 (mdmB) of Aspergillus terreus (strain NIH 2624 / FGSC A1156).